Here is a 504-residue protein sequence, read N- to C-terminus: ATP synthase subunit alpha (504 aa).

169 to 176 (GDRQIGKT) is a binding site for ATP.

Belongs to the ATPase alpha/beta chains family. In terms of assembly, F-type ATPases have 2 components, CF(1) - the catalytic core - and CF(0) - the membrane proton channel. CF(1) has five subunits: alpha(3), beta(3), gamma(1), delta(1), epsilon(1). CF(0) has three main subunits: a(1), b(2) and c(9-12). The alpha and beta chains form an alternating ring which encloses part of the gamma chain. CF(1) is attached to CF(0) by a central stalk formed by the gamma and epsilon chains, while a peripheral stalk is formed by the delta and b chains.

Its subcellular location is the cell membrane. It carries out the reaction ATP + H2O + 4 H(+)(in) = ADP + phosphate + 5 H(+)(out). Produces ATP from ADP in the presence of a proton gradient across the membrane. The alpha chain is a regulatory subunit. The protein is ATP synthase subunit alpha of Syntrophomonas wolfei subsp. wolfei (strain DSM 2245B / Goettingen).